Here is a 186-residue protein sequence, read N- to C-terminus: UPF0398 protein LBUL_0921 (186 aa).

Belongs to the UPF0398 family.

The sequence is that of UPF0398 protein LBUL_0921 from Lactobacillus delbrueckii subsp. bulgaricus (strain ATCC BAA-365 / Lb-18).